We begin with the raw amino-acid sequence, 397 residues long: Galactokinase (397 aa).

The tract at residues 1–27 is disordered; it reads MGEAVGEPSASGSGSCTGRSRRGCGRR. Positions 9–18 are enriched in low complexity; the sequence is SASGSGSCTG. 36-39 provides a ligand contact to substrate; the sequence is EHTD. ATP-binding positions include Ser-69 and 124–130; that span reads GAGLSSS. 2 residues coordinate Mg(2+): Ser-130 and Glu-161. Catalysis depends on Asp-173, which acts as the Proton acceptor. Residue Tyr-225 participates in substrate binding.

Belongs to the GHMP kinase family. GalK subfamily.

The protein localises to the cytoplasm. The enzyme catalyses alpha-D-galactose + ATP = alpha-D-galactose 1-phosphate + ADP + H(+). It participates in carbohydrate metabolism; galactose metabolism. Functionally, catalyzes the transfer of the gamma-phosphate of ATP to D-galactose to form alpha-D-galactose-1-phosphate (Gal-1-P). The chain is Galactokinase from Streptomyces lividans.